Reading from the N-terminus, the 333-residue chain is Ribosomal RNA small subunit methyltransferase H (333 aa).

S-adenosyl-L-methionine is bound by residues 42-44, Asp62, Phe86, Asp105, and Gln112; that span reads GGH.

This sequence belongs to the methyltransferase superfamily. RsmH family.

It is found in the cytoplasm. It catalyses the reaction cytidine(1402) in 16S rRNA + S-adenosyl-L-methionine = N(4)-methylcytidine(1402) in 16S rRNA + S-adenosyl-L-homocysteine + H(+). Its function is as follows. Specifically methylates the N4 position of cytidine in position 1402 (C1402) of 16S rRNA. The polypeptide is Ribosomal RNA small subunit methyltransferase H (Cupriavidus necator (strain ATCC 17699 / DSM 428 / KCTC 22496 / NCIMB 10442 / H16 / Stanier 337) (Ralstonia eutropha)).